The following is a 54-amino-acid chain: Large ribosomal subunit protein bL33A (54 aa).

This sequence belongs to the bacterial ribosomal protein bL33 family.

The chain is Large ribosomal subunit protein bL33A from Myxococcus xanthus (strain DK1622).